The chain runs to 306 residues: MGTRGLQGLGGRPQGRGCLLLAVAGATSLVTLLLAVPITVLAVLALVPQDQGRRVEKIIGSGAQAQKRLDDSKPSCILPSPSSLSETPDPRLHPQRSNASRNLASTSQGPVAQSSREASAWMTILSPAADSTPDPGVQQLPKGEPETDLNPELPAAHLIGAWMSGQGLSWEASQEEAFLRSGAQFSPTHGLALPQDGVYYLYCHVGYRGRTPPAGRSRARSLTLRSALYRAGGAYGRGSPELLLEGAETVTPVVDPIGYGSLWYTSVGFGGLAQLRSGERVYVNISHPDMVDYRRGKTFFGAVMVG.

Residues 1–27 (MGTRGLQGLGGRPQGRGCLLLAVAGAT) lie on the Cytoplasmic side of the membrane. Residues 28–48 (SLVTLLLAVPITVLAVLALVP) traverse the membrane as a helical; Signal-anchor for type II membrane protein segment. Residues 49–306 (QDQGRRVEKI…KTFFGAVMVG (258 aa)) are Extracellular-facing. 2 disordered regions span residues 63-112 (AQAQ…GPVA) and 127-151 (PAAD…DLNP). Positions 74-85 (PSCILPSPSSLS) are enriched in low complexity. The segment covering 95 to 112 (QRSNASRNLASTSQGPVA) has biased composition (polar residues). Residue asparagine 98 is glycosylated (N-linked (GlcNAc...) asparagine). Positions 154 to 305 (PAAHLIGAWM…GKTFFGAVMV (152 aa)) constitute a THD domain. Asparagine 284 is a glycosylation site (N-linked (GlcNAc...) asparagine).

The protein belongs to the tumor necrosis factor family. As to quaternary structure, heterotrimer of either two LTB and one LTA subunits or (less prevalent) two LTA and one LTB subunits.

It localises to the membrane. In terms of biological role, cytokine that binds to LTBR/TNFRSF3. May play a specific role in immune response regulation. Provides the membrane anchor for the attachment of the heterotrimeric complex to the cell surface. This chain is Lymphotoxin-beta (Ltb), found in Mus musculus (Mouse).